We begin with the raw amino-acid sequence, 418 residues long: Glutamyl-tRNA reductase (418 aa).

Residues 49–52 (TCNR), Ser-109, 114–116 (EPQ), and Gln-120 contribute to the substrate site. Catalysis depends on Cys-50, which acts as the Nucleophile. Residue 189–194 (GAGETI) participates in NADP(+) binding.

Belongs to the glutamyl-tRNA reductase family. Homodimer.

The catalysed reaction is (S)-4-amino-5-oxopentanoate + tRNA(Glu) + NADP(+) = L-glutamyl-tRNA(Glu) + NADPH + H(+). It functions in the pathway porphyrin-containing compound metabolism; protoporphyrin-IX biosynthesis; 5-aminolevulinate from L-glutamyl-tRNA(Glu): step 1/2. In terms of biological role, catalyzes the NADPH-dependent reduction of glutamyl-tRNA(Glu) to glutamate 1-semialdehyde (GSA). This chain is Glutamyl-tRNA reductase, found in Klebsiella pneumoniae (strain 342).